The following is a 214-amino-acid chain: Probable DNA (cytosine-5)-methyltransferase (214 aa).

C62 is an active-site residue.

This sequence belongs to the class I-like SAM-binding methyltransferase superfamily. C5-methyltransferase family. Probably requires another subunit for function.

It carries out the reaction a 2'-deoxycytidine in DNA + S-adenosyl-L-methionine = a 5-methyl-2'-deoxycytidine in DNA + S-adenosyl-L-homocysteine + H(+). This is probably the methylase that recognizes and modifies 5'-CpG-3'. In Dryophytes versicolor (chameleon treefrog), this protein is Probable DNA (cytosine-5)-methyltransferase.